The primary structure comprises 273 residues: Shikimate dehydrogenase (NADP(+)) (273 aa).

Residues 14–16 (SKS) and Thr61 each bind shikimate. Lys65 serves as the catalytic Proton acceptor. 2 residues coordinate shikimate: Asn86 and Asp102. NADP(+)-binding positions include 126 to 130 (GAGGA), 150 to 155 (NRTVAK), and Met213. Position 215 (Tyr215) interacts with shikimate. Position 237 (Gly237) interacts with NADP(+).

This sequence belongs to the shikimate dehydrogenase family. As to quaternary structure, homodimer.

It catalyses the reaction shikimate + NADP(+) = 3-dehydroshikimate + NADPH + H(+). It functions in the pathway metabolic intermediate biosynthesis; chorismate biosynthesis; chorismate from D-erythrose 4-phosphate and phosphoenolpyruvate: step 4/7. In terms of biological role, involved in the biosynthesis of the chorismate, which leads to the biosynthesis of aromatic amino acids. Catalyzes the reversible NADPH linked reduction of 3-dehydroshikimate (DHSA) to yield shikimate (SA). This chain is Shikimate dehydrogenase (NADP(+)), found in Tolumonas auensis (strain DSM 9187 / NBRC 110442 / TA 4).